A 389-amino-acid chain; its full sequence is Succinate--CoA ligase [ADP-forming] subunit beta (389 aa).

One can recognise an ATP-grasp domain in the interval 9–236 (RDMFEAHGVP…KDAADPLEAK (228 aa)). Residues K45, 52 to 54 (GRG), A94, and E99 contribute to the ATP site. The Mg(2+) site is built by N191 and D205. Substrate is bound by residues N256 and 318–320 (GIT).

Belongs to the succinate/malate CoA ligase beta subunit family. Heterotetramer of two alpha and two beta subunits. The cofactor is Mg(2+).

The enzyme catalyses succinate + ATP + CoA = succinyl-CoA + ADP + phosphate. It carries out the reaction GTP + succinate + CoA = succinyl-CoA + GDP + phosphate. It participates in carbohydrate metabolism; tricarboxylic acid cycle; succinate from succinyl-CoA (ligase route): step 1/1. Succinyl-CoA synthetase functions in the citric acid cycle (TCA), coupling the hydrolysis of succinyl-CoA to the synthesis of either ATP or GTP and thus represents the only step of substrate-level phosphorylation in the TCA. The beta subunit provides nucleotide specificity of the enzyme and binds the substrate succinate, while the binding sites for coenzyme A and phosphate are found in the alpha subunit. This chain is Succinate--CoA ligase [ADP-forming] subunit beta, found in Paenarthrobacter aurescens (strain TC1).